The sequence spans 310 residues: Transcription initiation factor IIB (310 aa).

2 repeat units span residues 126-209 (REIT…VREL) and 220-301 (RYVS…ELVQ).

This sequence belongs to the TFIIB family.

Functionally, stabilizes TBP binding to an archaeal box-A promoter. Also responsible for recruiting RNA polymerase II to the pre-initiation complex (DNA-TBP-TFIIB). This is Transcription initiation factor IIB from Pyrodictium occultum.